The chain runs to 412 residues: Divalent metal cation transporter MntH (412 aa).

A run of 11 helical transmembrane segments spans residues Leu-19–Ala-39, Ala-46–Ile-66, Val-94–Ile-114, Leu-122–Ile-142, Val-156–Gln-176, Ala-196–His-216, Ile-241–Phe-261, Val-290–Gly-310, Thr-329–Leu-349, Val-350–Phe-370, and Ile-389–Ala-409.

Belongs to the NRAMP family.

Its subcellular location is the cell inner membrane. H(+)-stimulated, divalent metal cation uptake system. This chain is Divalent metal cation transporter MntH, found in Citrobacter koseri (strain ATCC BAA-895 / CDC 4225-83 / SGSC4696).